A 53-amino-acid chain; its full sequence is MTESTLIIIASNVVTVFVSVAVNRTDISWLKQRLISLEERINKLGEKHVFNVG.

Residues Ser4–Asn23 traverse the membrane as a helical segment. Residues Arg24–Phe50 adopt a coiled-coil conformation.

It localises to the host membrane. This is an uncharacterized protein from Pseudoalteromonas phage PM2 (Bacteriophage PM2).